A 431-amino-acid chain; its full sequence is Enolase (431 aa).

Residue glutamine 163 participates in (2R)-2-phosphoglycerate binding. Catalysis depends on glutamate 205, which acts as the Proton donor. Mg(2+)-binding residues include aspartate 242, glutamate 288, and aspartate 315. Positions 340, 369, 370, and 391 each coordinate (2R)-2-phosphoglycerate. The Proton acceptor role is filled by lysine 340.

The protein belongs to the enolase family. The cofactor is Mg(2+).

The protein localises to the cytoplasm. It localises to the secreted. It is found in the cell surface. The enzyme catalyses (2R)-2-phosphoglycerate = phosphoenolpyruvate + H2O. It participates in carbohydrate degradation; glycolysis; pyruvate from D-glyceraldehyde 3-phosphate: step 4/5. Functionally, catalyzes the reversible conversion of 2-phosphoglycerate (2-PG) into phosphoenolpyruvate (PEP). It is essential for the degradation of carbohydrates via glycolysis. The sequence is that of Enolase from Bacillus cereus (strain G9842).